Reading from the N-terminus, the 392-residue chain is Galactokinase (392 aa).

Arg37, Glu43, His44, and Asp46 together coordinate alpha-D-galactose. ATP-binding residues include Gly136, Gly138, Ser140, and Ser141. Position 186 (Asp186) interacts with alpha-D-galactose. Asp186 serves as the catalytic Proton acceptor. Ser230 bears the Phosphoserine mark. Tyr236 provides a ligand contact to alpha-D-galactose.

The protein belongs to the GHMP kinase family. GalK subfamily. In terms of assembly, homodimer.

The catalysed reaction is alpha-D-galactose + ATP = alpha-D-galactose 1-phosphate + ADP + H(+). Its pathway is carbohydrate metabolism; galactose metabolism. Its function is as follows. Catalyzes the transfer of a phosphate from ATP to alpha-D-galactose and participates in the first committed step in the catabolism of galactose. This is Galactokinase (Galk1) from Mus musculus (Mouse).